Consider the following 60-residue polypeptide: Putative potassium channel blocker TXKS1 (60 aa).

The signal sequence occupies residues 1–28; sequence MNRLTTIILMLIVINVIMDDISESKVAA. 3 cysteine pairs are disulfide-bonded: C32–C49, C35–C55, and C39–C57. K59 is modified (lysine amide).

Expressed by the venom gland.

It localises to the secreted. In terms of biological role, inhibits potassium channels. This is Putative potassium channel blocker TXKS1 from Olivierus martensii (Manchurian scorpion).